We begin with the raw amino-acid sequence, 892 residues long: Iodate reductase subunit IdrA (892 aa).

3 residues coordinate [3Fe-4S] cluster: C27, C30, and C34. Residues 431-442 show a composition bias toward gly residues; it reads RGGGHQRGGLSA. The disordered stretch occupies residues 431–452; it reads RGGGHQRGGLSAGGNSEWLSPE.

The protein belongs to the prokaryotic molybdopterin-containing oxidoreductase family. As to quaternary structure, the iodate reductase (Idr) complex is composed of a molybdopterin-dependent iodate reductase (IdrA and IdrB subunits) and two associated peroxidases (IdrP1 and IdrP2). [3Fe-4S] cluster serves as cofactor. Requires Mo-bis(molybdopterin guanine dinucleotide) as cofactor.

The protein localises to the periplasm. Involved in iodate respiration. Probably catalyzes the reduction of iodate (IO(3)(-)) to hypoiodous acid (HIO) and H(2)O(2), using a reduced cytochrome c as the electron donor. This is Iodate reductase subunit IdrA from Pseudomonas sp. (strain SCT).